The following is a 376-amino-acid chain: Alanine racemase (376 aa).

Residue K44 is the Proton acceptor; specific for D-alanine of the active site. At K44 the chain carries N6-(pyridoxal phosphate)lysine. R139 contacts substrate. Y271 serves as the catalytic Proton acceptor; specific for L-alanine. A substrate-binding site is contributed by M319.

Belongs to the alanine racemase family. It depends on pyridoxal 5'-phosphate as a cofactor.

The enzyme catalyses L-alanine = D-alanine. It functions in the pathway amino-acid biosynthesis; D-alanine biosynthesis; D-alanine from L-alanine: step 1/1. In terms of biological role, catalyzes the interconversion of L-alanine and D-alanine. May also act on other amino acids. The sequence is that of Alanine racemase (alr) from Bordetella petrii (strain ATCC BAA-461 / DSM 12804 / CCUG 43448).